Here is a 263-residue protein sequence, read N- to C-terminus: 5'-nucleotidase SurE (263 aa).

A divalent metal cation is bound by residues aspartate 10, aspartate 11, serine 41, and asparagine 95.

Belongs to the SurE nucleotidase family. It depends on a divalent metal cation as a cofactor.

It is found in the cytoplasm. The enzyme catalyses a ribonucleoside 5'-phosphate + H2O = a ribonucleoside + phosphate. Its function is as follows. Nucleotidase that shows phosphatase activity on nucleoside 5'-monophosphates. This is 5'-nucleotidase SurE from Methanoculleus marisnigri (strain ATCC 35101 / DSM 1498 / JR1).